Consider the following 57-residue polypeptide: U13-myrmicitoxin-Mri1a (57 aa).

An N-terminal signal peptide occupies residues 1–23; sequence MKIIHVLLLVAVVAITMSPSIMA. The propeptide occupies 24 to 29; it reads ESVAEA. Residue E56 is modified to Glutamic acid 1-amide.

Expressed by the venom gland.

The protein localises to the secreted. In terms of biological role, induces paralysis 1 hour after injection into insects (blowfly L.caesar) but does not appear to be lethal. The chain is U13-myrmicitoxin-Mri1a from Manica rubida (European giant red ant).